Reading from the N-terminus, the 1529-residue chain is ATP-dependent permease PDR15 (1529 aa).

A compositionally biased stretch (basic and acidic residues) spans 1–13; that stretch reads MSSDIRDVEERNS. Residues 1–38 are disordered; that stretch reads MSSDIRDVEERNSRSSSSSSSSNSAAQSIGQHPYRGFD. At 1–531 the chain is on the cytoplasmic side; sequence MSSDIRDVEE…NFWRMKQSAS (531 aa). Residues 14–24 are compositionally biased toward low complexity; the sequence is RSSSSSSSSNS. Residues 171–420 form the ABC transporter 1 domain; the sequence is LRLLKPSKEE…FQDMGYYCPP (250 aa). Residues 532–552 form a helical membrane-spanning segment; it reads VTLWQVIGNSVMAFILGSMFY. Over 553 to 567 the chain is Extracellular; the sequence is KVMKKNDTSTFYFRG. N-linked (GlcNAc...) asparagine glycosylation is present at Asn-558. Residues 568–588 form a helical membrane-spanning segment; it reads AAMFFAILFNAFSCLLEIFSL. Residues 589–617 are Cytoplasmic-facing; that stretch reads YETRPITEKHRTYSLYHPSADAFASVLSE. A helical membrane pass occupies residues 618–638; it reads MPPKLITAVCFNIIFYFLVDF. The Extracellular segment spans residues 639–642; that stretch reads RRNG. Residues 643-663 traverse the membrane as a helical segment; sequence GVFFFYFLINVIATFTLSHLF. The Cytoplasmic portion of the chain corresponds to 664-699; that stretch reads RCVGSLTKTLQEAMVPASMLLLAISMYTGFAIPKTK. Residues 700–720 traverse the membrane as a helical segment; that stretch reads ILGWSIWIWYINPLAYLFESL. At 721 to 783 the chain is on the extracellular side; the sequence is MINEFHDRRF…YDYEHKHKWR (63 aa). Residue Asn-744 is glycosylated (N-linked (GlcNAc...) asparagine). The chain crosses the membrane as a helical span at residues 784–804; the sequence is GFGIGMAYVVFFFFVYLILCE. Topologically, residues 805–1219 are cytoplasmic; sequence YNEGAKQKGE…LFQQYWRSPD (415 aa). Basic and acidic residues predominate over residues 829–840; it reads EGKLQEKHRPGD. The tract at residues 829–873 is disordered; that stretch reads EGKLQEKHRPGDIENNAGSSPDSATTEKKILDDSSEGSDSSSDNA. One can recognise an ABC transporter 2 domain in the interval 884-1127; sequence FHWRDLCYDV…MIDYFESKGA (244 aa). Position 920–927 (920–927) interacts with ATP; the sequence is GASGAGKT. Residues 1220–1240 traverse the membrane as a helical segment; that stretch reads YLWSKFILTIFNQVFIGFTFF. At 1241 to 1312 the chain is on the extracellular side; the sequence is KADRSLQGLQ…VEIPWNILAG (72 aa). Residues 1313 to 1333 form a helical membrane-spanning segment; it reads TIAYCIYYYAVGFYANASAAG. At 1334–1340 the chain is on the cytoplasmic side; that stretch reads QLHERGA. Residues 1341–1361 form a helical membrane-spanning segment; sequence LFWLFSIAFYVYIGSMGLLMI. Over 1362–1368 the chain is Extracellular; sequence SFNEVAE. A helical membrane pass occupies residues 1369 to 1389; that stretch reads TAAHMGTLLFTMALSFCGVMA. Residues 1390-1396 are Cytoplasmic-facing; it reads TPKVMPR. A helical transmembrane segment spans residues 1397–1417; sequence FWIFMYRVSPLTYMIDALLAL. Residues 1418 to 1492 lie on the Extracellular side of the membrane; that stretch reads GVANVDVKCS…SSHYYRRWRN (75 aa). A helical membrane pass occupies residues 1493–1513; the sequence is YGIFICYIAFDYIAATFLYWL. Residues 1514–1529 lie on the Cytoplasmic side of the membrane; that stretch reads SRVPKKNGKISEKPKK.

Belongs to the ABC transporter superfamily. ABCG family. PDR (TC 3.A.1.205) subfamily.

Its subcellular location is the membrane. The polypeptide is ATP-dependent permease PDR15 (PDR15) (Saccharomyces cerevisiae (strain ATCC 204508 / S288c) (Baker's yeast)).